A 355-amino-acid chain; its full sequence is 3-dehydroquinate synthase (355 aa).

NAD(+) contacts are provided by residues Glu71–Lys76, Gly105–Asp109, Thr129–Ser130, Lys142, and Lys151. Residues Glu184, His246, and His263 each contribute to the Zn(2+) site.

This sequence belongs to the sugar phosphate cyclases superfamily. Dehydroquinate synthase family. It depends on Co(2+) as a cofactor. Zn(2+) is required as a cofactor. NAD(+) serves as cofactor.

Its subcellular location is the cytoplasm. The enzyme catalyses 7-phospho-2-dehydro-3-deoxy-D-arabino-heptonate = 3-dehydroquinate + phosphate. Its pathway is metabolic intermediate biosynthesis; chorismate biosynthesis; chorismate from D-erythrose 4-phosphate and phosphoenolpyruvate: step 2/7. Its function is as follows. Catalyzes the conversion of 3-deoxy-D-arabino-heptulosonate 7-phosphate (DAHP) to dehydroquinate (DHQ). The chain is 3-dehydroquinate synthase from Streptococcus sanguinis (strain SK36).